A 207-amino-acid chain; its full sequence is Ribosomal RNA small subunit methyltransferase G (207 aa).

Residues Gly-73, Leu-78, 124–125, and Arg-139 each bind S-adenosyl-L-methionine; that span reads VE.

It belongs to the methyltransferase superfamily. RNA methyltransferase RsmG family.

It is found in the cytoplasm. The enzyme catalyses guanosine(527) in 16S rRNA + S-adenosyl-L-methionine = N(7)-methylguanosine(527) in 16S rRNA + S-adenosyl-L-homocysteine. Functionally, specifically methylates the N7 position of guanine in position 527 of 16S rRNA. This Escherichia coli O1:K1 / APEC protein is Ribosomal RNA small subunit methyltransferase G.